A 391-amino-acid polypeptide reads, in one-letter code: B2 bradykinin receptor (391 aa).

Residues 1-60 (MFSPWKISMFLSVREDSVPTTASFSADMLNVTLQGPTLNGTFAQSKCPQVEWLGWLNTIQ) lie on the Extracellular side of the membrane. N-linked (GlcNAc...) asparagine glycosylation is found at Asn-30 and Asn-39. Residues 61–84 (PPFLWVLFVLATLENIFVLSVFCL) traverse the membrane as a helical segment. Residues 85–93 (HKSSCTVAE) lie on the Cytoplasmic side of the membrane. The helical transmembrane segment at 94–118 (IYLGNLAAADLILACGLPFWAITIS) threads the bilayer. Residues 119–131 (NNFDWLFGETLCR) are Extracellular-facing. A disulfide bridge links Cys-130 with Cys-211. A helical transmembrane segment spans residues 132-153 (VVNAIISMNLYSSICFLMLVSI). The Cytoplasmic segment spans residues 154–175 (DRYLALVKTMSMGRMRGVRWAK). Phosphotyrosine is present on Tyr-156. Residues 176–198 (LYSLVIWGCTLLLSSPMLVFRTM) traverse the membrane as a helical segment. Residues 199-221 (KEYSDEGHNVTACVISYPSLIWE) are Extracellular-facing. Asn-207 carries N-linked (GlcNAc...) asparagine glycosylation. The chain crosses the membrane as a helical span at residues 222 to 248 (VFTNMLLNVVGFLLPLSVITFCTMQIM). Residues 249–267 (QVLRNNEMQKFKEIQTERR) lie on the Cytoplasmic side of the membrane. The helical transmembrane segment at 268-292 (ATVLVLVVLLLFIICWLPFQISTFL) threads the bilayer. The Extracellular segment spans residues 293-311 (DTLHRLGILSSCQDERIID). The helical transmembrane segment at 312 to 335 (VITQIASFMAYSNSCLNPLVYVIV) threads the bilayer. Residues 336–391 (GKRFRKKSWEVYQGVCQKGGCRSEPIQMENSMGTLRTSISVERQIHKLQDWAGSRQ) lie on the Cytoplasmic side of the membrane. Tyr-347 bears the Phosphotyrosine mark. Cys-351 is lipidated: S-palmitoyl cysteine. The residue at position 366 (Ser-366) is a Phosphoserine. Thr-369 bears the Phosphothreonine mark. Ser-373 and Ser-375 each carry phosphoserine; by GRK6.

This sequence belongs to the G-protein coupled receptor 1 family. Bradykinin receptor subfamily. BDKRB2 sub-subfamily. As to quaternary structure, forms a complex with PECAM1 and GNAQ. Interacts with PECAM1. As to expression, ubiquitous. Widespread in normal smooth muscle tissue and neurons.

It localises to the cell membrane. Its function is as follows. Receptor for bradykinin. It is associated with G proteins that activate a phosphatidylinositol-calcium second messenger system. The protein is B2 bradykinin receptor (BDKRB2) of Homo sapiens (Human).